The sequence spans 1446 residues: DNA polymerase III PolC-type (1446 aa).

The Exonuclease domain occupies 425 to 581 (YVIFDVETTG…ADAESTGYLL (157 aa)).

It belongs to the DNA polymerase type-C family. PolC subfamily.

It is found in the cytoplasm. It catalyses the reaction DNA(n) + a 2'-deoxyribonucleoside 5'-triphosphate = DNA(n+1) + diphosphate. Required for replicative DNA synthesis. This DNA polymerase also exhibits 3' to 5' exonuclease activity. In Latilactobacillus sakei subsp. sakei (strain 23K) (Lactobacillus sakei subsp. sakei), this protein is DNA polymerase III PolC-type.